The chain runs to 2169 residues: Protein sidekick-1 (2169 aa).

Residues methionine 1–alanine 50 form the signal peptide. Topologically, residues glutamine 51–tryptophan 1961 are extracellular. 5 Ig-like C2-type domains span residues proline 56–glutamine 138, glycine 143–isoleucine 229, proline 245–serine 333, proline 338–threonine 428, and proline 432–threonine 521. A disulfide bridge links cysteine 78 with cysteine 121. Asparagine 93, asparagine 223, and asparagine 253 each carry an N-linked (GlcNAc...) asparagine glycan. 3 disulfide bridges follow: cysteine 267/cysteine 314, cysteine 360/cysteine 410, and cysteine 453/cysteine 505. N-linked (GlcNAc...) asparagine glycosylation is found at asparagine 502, asparagine 524, and asparagine 534. Residues arginine 525 to glutamate 615 enclose the Ig-like C2-type 6 domain. A disulfide bond links cysteine 547 and cysteine 599. Residues asparagine 607, asparagine 631, asparagine 734, asparagine 773, asparagine 834, asparagine 967, and asparagine 977 are each glycosylated (N-linked (GlcNAc...) asparagine). 13 consecutive Fibronectin type-III domains span residues serine 622–glutamate 718, proline 723–glycine 819, proline 824–aspartate 922, alanine 926–glutamate 1020, alanine 1024–alanine 1123, alanine 1128–serine 1226, proline 1231–aspartate 1328, proline 1332–arginine 1426, proline 1431–aspartate 1528, proline 1533–alanine 1651, alanine 1656–alanine 1752, alanine 1756–alanine 1851, and serine 1854–proline 1955. N-linked (GlcNAc...) asparagine glycosylation is found at asparagine 1234 and asparagine 1285. The segment at threonine 1423–serine 1443 is disordered. Positions glutamine 1433–serine 1443 are enriched in polar residues. Residues asparagine 1606, asparagine 1700, asparagine 1719, asparagine 1771, and asparagine 1845 are each glycosylated (N-linked (GlcNAc...) asparagine). The chain crosses the membrane as a helical span at residues phenylalanine 1962–valine 1982. At leucine 1983 to valine 2169 the chain is on the cytoplasmic side. 2 disordered regions span residues threonine 2028–aspartate 2050 and glycine 2145–valine 2169. Positions threonine 2160–valine 2169 are enriched in polar residues. The PDZ-binding signature appears at threonine 2163–valine 2169.

Belongs to the sidekick family. In terms of assembly, homodimer; mediates homophilic interactions to promote cell adhesion. As to expression, expressed by non-overlapping subsets of retinal neurons. SDK1, SDK2, DSCAM and DSCAML1 are expressed in non-overlapping subsets of interneurons and retinal ganglion cells (RGCs) that form synapses in distinct inner plexiform layer (IPL) sublaminae.

It localises to the cell membrane. It is found in the synapse. Functionally, adhesion molecule that promotes lamina-specific synaptic connections in the retina. Expressed in specific subsets of interneurons and retinal ganglion cells (RGCs) and promotes synaptic connectivity via homophilic interactions. The polypeptide is Protein sidekick-1 (Gallus gallus (Chicken)).